Reading from the N-terminus, the 1249-residue chain is Protein lingerer (1249 aa).

The tract at residues 1–66 (MSTQTRSGGG…VVKAKQPTAE (66 aa)) is disordered. 2 stretches are compositionally biased toward gly residues: residues 7–30 (SGGGGGGGGRNKEAGGGSGGGAAG) and 38–50 (GSTGAASGAGAGG). Residues 84 to 124 (KIQEKIQSLMETTQRSEEEVCCALQECDSDLDRAVIFLLET) enclose the UBA domain. 10 disordered regions span residues 132 to 312 (TTSK…LKPE), 350 to 375 (SAGAGAQQQQSQQSTQTGVPPAASNV), 454 to 506 (MPPM…PPTT), 549 to 579 (YAAAATQQPPVRRQRARVPPPSKIPSSAVEM), 616 to 717 (TTGT…TSVS), 738 to 922 (PYGQ…SLPI), 1016 to 1042 (GRFTRTDNNSSPVSNVPSSLSQQTGSG), 1124 to 1149 (QQQSKGQTVANQQSGSGSGSDMAPSM), 1164 to 1186 (KQSFHSGTPPPYNIAGTQTAGTT), and 1211 to 1249 (QNMHQDSNSSGQRPQNNNQGKTASKQQGYSASTYWTGPN). The span at 186–209 (NRGGSGNQRSGGPGRGGRAGGYRD) shows a compositional bias: gly residues. A compositionally biased stretch (basic and acidic residues) spans 210-227 (GGGDRDRDRDRNGYDKGG). 2 stretches are compositionally biased toward gly residues: residues 228–240 (EGGGYRNRAGGDG) and 248–269 (DGPGGPGRGNYGSRGGRGGGPR). Residues 350-369 (SAGAGAQQQQSQQSTQTGVP) are compositionally biased toward low complexity. Polar residues predominate over residues 457-494 (MNTSSSLSAEQSQYFSTLSSQNSNLQPTPSAVGFQQQP). Composition is skewed to low complexity over residues 549–559 (YAAAATQQPPV), 616–639 (TTGTAGSSTVQQQQQGAQVPPATV), and 647–664 (QSQLQQQQQQVVSQAPQQ). The segment covering 678–705 (ASSQIMPGQGTTEALSSQNDGLANSYSR) has biased composition (polar residues). Positions 706-717 (TNASGSVSTSVS) are enriched in low complexity. Composition is skewed to polar residues over residues 738–769 (PYGQSASTNTALTGGYQNAPYSSTQANKTASY) and 777–809 (GYNNMSYSNNQVTNAYPPSTNNYSSYNQGNVNA). Residues 811-861 (QPPSSSVTNNVVPNNNTGNSVGGVSNQSNLPVNNNAVNSSSNNNAGGYLSS) show a composition bias toward low complexity. Residues 862-873 (QYPVSQTSSAFP) show a composition bias toward polar residues. Composition is skewed to low complexity over residues 874–884 (SQQNYQNSSQN), 892–922 (NSNTGVASSTVSNSSTNNSNNNVTSSSSLPI), and 1023–1034 (NNSSPVSNVPSS). Over residues 1124 to 1138 (QQQSKGQTVANQQSG) the composition is skewed to polar residues. Polar residues predominate over residues 1216–1249 (DSNSSGQRPQNNNQGKTASKQQGYSASTYWTGPN).

It is found in the cytoplasm. In terms of biological role, acts in the nervous system to mediate the control of copulatory organs during courtship. This chain is Protein lingerer, found in Anopheles gambiae (African malaria mosquito).